The primary structure comprises 88 residues: Acyl-CoA-binding protein homolog (88 aa).

Positions 3–88 (PQADFDKAAG…AHELIEKYGL (86 aa)) constitute an ACB domain. An acyl-CoA contacts are provided by residues Lys-15, 30-34 (YGLYK), Lys-52, Lys-56, and Tyr-75.

This sequence belongs to the ACBP family. As to expression, brain. Is selectively expressed in glial cells.

It localises to the endoplasmic reticulum. The protein resides in the golgi apparatus. May play important functions in the control of brain and pituitary activities. May regulate GABA neurotransmission through a paracrine and/or autocrine mechanism. May not bind acyl-CoA esters. In Pelophylax ridibundus (Marsh frog), this protein is Acyl-CoA-binding protein homolog.